A 466-amino-acid polypeptide reads, in one-letter code: UDP-N-acetylmuramoylalanine--D-glutamate ligase (466 aa).

Position 117 to 123 (117 to 123 (GTKGKTT)) interacts with ATP.

This sequence belongs to the MurCDEF family.

It localises to the cytoplasm. The enzyme catalyses UDP-N-acetyl-alpha-D-muramoyl-L-alanine + D-glutamate + ATP = UDP-N-acetyl-alpha-D-muramoyl-L-alanyl-D-glutamate + ADP + phosphate + H(+). Its pathway is cell wall biogenesis; peptidoglycan biosynthesis. Cell wall formation. Catalyzes the addition of glutamate to the nucleotide precursor UDP-N-acetylmuramoyl-L-alanine (UMA). The protein is UDP-N-acetylmuramoylalanine--D-glutamate ligase of Roseiflexus sp. (strain RS-1).